Here is a 487-residue protein sequence, read N- to C-terminus: NAD(+)--arginine ADP-ribosyltransferase EFV (487 aa).

The stretch at 2–51 (SQLNKWQKELQALQKANYQETDNQLFNVYRQSLIDIKKRLKVYTENAESL) forms a coiled coil. One can recognise a TR mART core domain in the interval 315–487 (LDFFGQSDLQ…DNILEVTILG (173 aa)). Residues 346–358 (TSDA…KILR) and 394–400 (RGVSANE) contribute to the NAD(+) site. Active-site residues include Arg394, Ser415, and Glu463. NAD(+) is bound at residue Glu463.

The protein localises to the secreted. It carries out the reaction L-arginyl-[protein] + NAD(+) = N(omega)-(ADP-D-ribosyl)-L-arginyl-[protein] + nicotinamide + H(+). Functionally, a probable mono(ADP-ribosyl)transferase, it may ADP-ribosylate Arg in target protein(s). Upon expression in yeast cells causes cell death. The sequence is that of NAD(+)--arginine ADP-ribosyltransferase EFV from Enterococcus faecalis (strain ATCC 700802 / V583).